A 213-amino-acid chain; its full sequence is Large ribosomal subunit protein uL3 (213 aa).

The protein belongs to the universal ribosomal protein uL3 family. In terms of assembly, part of the 50S ribosomal subunit. Forms a cluster with proteins L14 and L19.

Its function is as follows. One of the primary rRNA binding proteins, it binds directly near the 3'-end of the 23S rRNA, where it nucleates assembly of the 50S subunit. This Bifidobacterium longum (strain DJO10A) protein is Large ribosomal subunit protein uL3.